The primary structure comprises 115 residues: Non-specific lipid-transfer protein 4.3 (115 aa).

Residues 1 to 25 form the signal peptide; sequence MARAAATQLVLVAMVAAMLLVATDA. Intrachain disulfides connect C29/C77, C39/C54, C55/C97, and C75/C111.

Belongs to the plant LTP family.

Its function is as follows. Plant non-specific lipid-transfer proteins transfer phospholipids as well as galactolipids across membranes. May play a role in wax or cutin deposition in the cell walls of expanding epidermal cells and certain secretory tissues. The chain is Non-specific lipid-transfer protein 4.3 (LTP4.3) from Hordeum vulgare (Barley).